A 370-amino-acid chain; its full sequence is Aspartate-semialdehyde dehydrogenase (370 aa).

NADP(+) is bound by residues 10-13 (RGMV), 37-38 (TS), and Q73. Residue R102 participates in phosphate binding. Residue C135 is the Acyl-thioester intermediate of the active site. Residue Q162 participates in substrate binding. NADP(+)-binding positions include 165–166 (SG) and P193. Residue E241 coordinates substrate. K244 lines the phosphate pocket. R268 lines the substrate pocket. H275 (proton acceptor) is an active-site residue. Q351 contributes to the NADP(+) binding site.

It belongs to the aspartate-semialdehyde dehydrogenase family. As to quaternary structure, homodimer.

The catalysed reaction is L-aspartate 4-semialdehyde + phosphate + NADP(+) = 4-phospho-L-aspartate + NADPH + H(+). It functions in the pathway amino-acid biosynthesis; L-lysine biosynthesis via DAP pathway; (S)-tetrahydrodipicolinate from L-aspartate: step 2/4. It participates in amino-acid biosynthesis; L-methionine biosynthesis via de novo pathway; L-homoserine from L-aspartate: step 2/3. Its pathway is amino-acid biosynthesis; L-threonine biosynthesis; L-threonine from L-aspartate: step 2/5. Functionally, catalyzes the NADPH-dependent formation of L-aspartate-semialdehyde (L-ASA) by the reductive dephosphorylation of L-aspartyl-4-phosphate. This Pseudomonas aeruginosa (strain ATCC 15692 / DSM 22644 / CIP 104116 / JCM 14847 / LMG 12228 / 1C / PRS 101 / PAO1) protein is Aspartate-semialdehyde dehydrogenase (asd).